The primary structure comprises 345 residues: Fructose-1,6-bisphosphatase class 1 2 (345 aa).

Mg(2+)-binding residues include Glu-90, Asp-109, Leu-111, and Asp-112. Substrate is bound by residues Asp-112–Ser-115 and Asn-200. Residue Glu-272 participates in Mg(2+) binding.

The protein belongs to the FBPase class 1 family. Homotetramer. Mg(2+) is required as a cofactor.

Its subcellular location is the cytoplasm. The enzyme catalyses beta-D-fructose 1,6-bisphosphate + H2O = beta-D-fructose 6-phosphate + phosphate. The protein operates within carbohydrate biosynthesis; gluconeogenesis. This chain is Fructose-1,6-bisphosphatase class 1 2, found in Nitrobacter hamburgensis (strain DSM 10229 / NCIMB 13809 / X14).